The sequence spans 241 residues: Probable transcriptional regulatory protein H16_A0916 (241 aa).

Belongs to the TACO1 family.

The protein localises to the cytoplasm. The polypeptide is Probable transcriptional regulatory protein H16_A0916 (Cupriavidus necator (strain ATCC 17699 / DSM 428 / KCTC 22496 / NCIMB 10442 / H16 / Stanier 337) (Ralstonia eutropha)).